The following is a 122-amino-acid chain: Proximal tubules-expressed gene protein (122 aa).

The helical transmembrane segment at 33–53 (WLTGLIAMTVFLFLVLVVYVA) threads the bilayer.

It belongs to the PDZK1-interacting protein 1/SMIM24 family. As to expression, expressed in prospective pronephric mesoderm at the late gastrula stage. After neurulation, expressed in the intermediate mesoderm, eye placode and blood islands. Expression becomes restricted to the pronephric proximal tubule during embryogenesis, but is absent from the connecting tubules.

The protein resides in the membrane. Its function is as follows. Essential for pronephric tubule development, acting upstream of pax8 and lhx1/lim1 and downstream of retinoic acid signaling to induce pronephric mesoderm to form pronephric tubule-specific cells. This Xenopus laevis (African clawed frog) protein is Proximal tubules-expressed gene protein (pteg).